Consider the following 408-residue polypeptide: LL-diaminopimelate aminotransferase (408 aa).

Positions 15 and 42 each coordinate substrate. Pyridoxal 5'-phosphate is bound by residues Y72, 108–109, Y132, N187, Y218, and 246–248; these read SK and SFS. Substrate is bound by residues K109, Y132, and N187. Residue K249 is modified to N6-(pyridoxal phosphate)lysine. R257 and N292 together coordinate pyridoxal 5'-phosphate. Substrate-binding residues include N292 and R388.

The protein belongs to the class-I pyridoxal-phosphate-dependent aminotransferase family. LL-diaminopimelate aminotransferase subfamily. As to quaternary structure, homodimer. Pyridoxal 5'-phosphate serves as cofactor.

It carries out the reaction (2S,6S)-2,6-diaminopimelate + 2-oxoglutarate = (S)-2,3,4,5-tetrahydrodipicolinate + L-glutamate + H2O + H(+). The protein operates within amino-acid biosynthesis; L-lysine biosynthesis via DAP pathway; LL-2,6-diaminopimelate from (S)-tetrahydrodipicolinate (aminotransferase route): step 1/1. Functionally, involved in the synthesis of meso-diaminopimelate (m-DAP or DL-DAP), required for both lysine and peptidoglycan biosynthesis. Catalyzes the direct conversion of tetrahydrodipicolinate to LL-diaminopimelate. In Prochlorococcus marinus (strain MIT 9313), this protein is LL-diaminopimelate aminotransferase.